Consider the following 45-residue polypeptide: Mu-conotoxin-like Cal 12.1.2a (45 aa).

Disulfide bonds link C3/C16, C11/C28, C18/C33, and C27/C39. A 4-hydroxyproline modification is found at P23. A 6'-bromotryptophan mark is found at W37 and W38. P40 bears the 4-hydroxyproline mark. 6'-bromotryptophan is present on W44.

In terms of tissue distribution, expressed by the venom duct.

Its subcellular location is the secreted. Its function is as follows. Mu-conotoxins block voltage-gated sodium channels. This toxin reversibly blocks voltage-gated sodium channel in cephalopods, with no alteration in the voltage dependence of sodium conductance or on the kinetics of inactivation. This chain is Mu-conotoxin-like Cal 12.1.2a, found in Californiconus californicus (California cone).